Consider the following 80-residue polypeptide: Large ribosomal subunit protein bL31 (80 aa).

4 residues coordinate Zn(2+): Cys-16, Cys-18, Cys-38, and Cys-41.

Belongs to the bacterial ribosomal protein bL31 family. Type A subfamily. As to quaternary structure, part of the 50S ribosomal subunit. Zn(2+) is required as a cofactor.

Functionally, binds the 23S rRNA. In Mycobacterium bovis (strain ATCC BAA-935 / AF2122/97), this protein is Large ribosomal subunit protein bL31.